We begin with the raw amino-acid sequence, 271 residues long: Extracellular metalloprotease TRV_06892 (271 aa).

An N-terminal signal peptide occupies residues 1–19 (MRFSVLLTGLAAAGSIATA). N136 is a glycosylation site (N-linked (GlcNAc...) asparagine). H185 serves as a coordination point for Zn(2+). The active site involves E186. A Zn(2+)-binding site is contributed by H189. Residue N200 is glycosylated (N-linked (GlcNAc...) asparagine). C222 and C248 are joined by a disulfide.

The protein belongs to the peptidase M43B family.

Its subcellular location is the secreted. Secreted metalloproteinase that allows assimilation of proteinaceous substrates. Plays a pivotal role as a pathogenicity determinant during infections and contributes to the ability of the pathogen to persist within the mammalian host. This is Extracellular metalloprotease TRV_06892 from Trichophyton verrucosum (strain HKI 0517).